Here is a 552-residue protein sequence, read N- to C-terminus: Putative transport protein YPTS_4123 (552 aa).

The next 6 membrane-spanning stretches (helical) occupy residues 1 to 21 (MSAIALTVSMLALVAVLGLWI), 26 to 46 (IYGVGLGIGGVLFGGIIVGHF), 65 to 85 (FGLILFVYTIGIQVGPGFFSS), 96 to 116 (FAILMVVVGGLVTAIIHKLFA), 119 to 139 (LPIILGVFSGAVTNTPALGAA), and 158 to 178 (MGYAMAYPFGICGILLVMWLI). RCK C-terminal domains are found at residues 192–276 (AFDS…VVGE) and 279–361 (DVTL…IVGN). The next 6 membrane-spanning stretches (helical) occupy residues 371–391 (MLPVFIGVGLGVLLGSIPLFV), 393–413 (GFPAALRLGLAGGPLVVALIL), 439–459 (IVLFLSVVGLKSGGDFINTLV), 464–484 (LAWIGYGAMITGIPLLTVGIL), 493–513 (YLTLCGMLAGSMTDPPALAFA), and 530–550 (VYPLAMFLRIMSPQILAVLFW).

The protein belongs to the AAE transporter (TC 2.A.81) family. YidE subfamily.

It is found in the cell membrane. In Yersinia pseudotuberculosis serotype IB (strain PB1/+), this protein is Putative transport protein YPTS_4123.